Consider the following 130-residue polypeptide: Small ribosomal subunit protein uS9 (130 aa).

This sequence belongs to the universal ribosomal protein uS9 family.

The chain is Small ribosomal subunit protein uS9 from Albidiferax ferrireducens (strain ATCC BAA-621 / DSM 15236 / T118) (Rhodoferax ferrireducens).